We begin with the raw amino-acid sequence, 368 residues long: tRNA-specific 2-thiouridylase MnmA (368 aa).

Residues 11–18 and Met37 each bind ATP; that span reads GMSGGVDS. The interaction with target base in tRNA stretch occupies residues 97 to 99; the sequence is NPD. Cys102 serves as the catalytic Nucleophile. A disulfide bridge connects residues Cys102 and Cys199. Gly127 contributes to the ATP binding site. The interaction with tRNA stretch occupies residues 149-151; that stretch reads KDQ. Cys199 serves as the catalytic Cysteine persulfide intermediate. Residues 311–312 form an interaction with tRNA region; sequence RY.

This sequence belongs to the MnmA/TRMU family. As to quaternary structure, interacts with TusE.

Its subcellular location is the cytoplasm. It catalyses the reaction S-sulfanyl-L-cysteinyl-[protein] + uridine(34) in tRNA + AH2 + ATP = 2-thiouridine(34) in tRNA + L-cysteinyl-[protein] + A + AMP + diphosphate + H(+). Functionally, catalyzes the 2-thiolation of uridine at the wobble position (U34) of tRNA(Lys), tRNA(Glu) and tRNA(Gln), leading to the formation of s(2)U34, the first step of tRNA-mnm(5)s(2)U34 synthesis. Sulfur is provided by IscS, via a sulfur-relay system. Binds ATP and its substrate tRNAs. The chain is tRNA-specific 2-thiouridylase MnmA from Escherichia coli O6:H1 (strain CFT073 / ATCC 700928 / UPEC).